Reading from the N-terminus, the 509-residue chain is Cytochrome P450 monooxygenase cpaH (509 aa).

N15 is a glycosylation site (N-linked (GlcNAc...) asparagine). The chain crosses the membrane as a helical span at residues 31–51; that stretch reads TTILLIGVTYCILVGIYRVTL. 2 N-linked (GlcNAc...) asparagine glycosylation sites follow: N306 and N412. C453 is a binding site for heme.

It belongs to the cytochrome P450 family. Heme serves as cofactor.

It is found in the membrane. It participates in secondary metabolite biosynthesis. Functionally, cytochrome P450 monooxygenase; part of the gene cluster that mediates the biosynthesis of the fungal neurotoxin cyclopiazonic acid (CPA), a nanomolar inhibitor of Ca(2+)-ATPase with a unique pentacyclic indole tetramic acid scaffold. The hybrid two module polyketide synthase-nonribosomal peptide synthetase (PKS-NRPS) cpaS incorporates acetyl-CoA, malonyl-CoA, and tryptophan (Trp) and utilizes a C-terminal redox-incompetent reductase domain to make and release the tryptophan tetramic acid, cyclo-acetoacetyl-L-tryptophan (c-AATrp), as the first intermediate in the pathway. CpaS catalyzes a Dieckmann-type cyclization on the N-acetoacetyl-Trp intermediate bound in thioester linkage to the phosphopantetheinyl arm of the T domain to form and release c-AATrp. CpaD then regiospecifically dimethylallylates c-AATrp to form beta-cyclopiazonic acid. CpaD discriminates against free Trp but accepts tryptophan-containing thiohydantoins, diketopiperazines, and linear peptides as substrates for C4-prenylation and also acts as a regiospecific O-dimethylallyltransferase (DMAT) on a tyrosine-derived tetramic acid. The beta-cyclopiazonate dehydrogenase cpaO then carries out the dehydrogenation of beta-CPA to yield an unstable enimine product, which is captured by intramolecular cyclization to create the pentacyclic fused scaffold of alpha-cyclopiazonate. Finally, the cytochrome P450 monooxygenase cpaH mediates the conversion of CPA into the less toxic 2-oxocyclopiazonic acid, the end product of the CPA pathway in A.oryza. The protein is Cytochrome P450 monooxygenase cpaH of Aspergillus oryzae (Yellow koji mold).